The sequence spans 594 residues: MSWLFGLNKGQQGPPSVPGFPEPPSPPGGSGDGGDKNKPKDKWSNFDPTGLERAAKAARELDQSRHAKEALNLAKVQEETLQLEQQSKIKEYEAAVEQLKNEQIRVQAEERRKTLNEETKQHQARAQYQDKLARQRYEDQLRQQQLQNEENLRRQEESVQKQEAMRKATVEHEMELRHKNEMLRIEAEARARAKVERENADIIRENIRLKAAEHRQTVLESIKTAGTVFGEGFRAFISDWDKVTATVAGLSLLAVGIYTAKNATGVAGRYIEARLGKPSLVRDTSRFTVAEAVKHPVKISKRLLSKIQDALEGVILSPKLEERVRDIAIATRNTKANKGLYRNILMYGPPGTGKTLFAKKLAMHSGMDYAIMTGGDVAPMGREGVTAMHKVFDWAGTSKRGLLLFVDEADAFLRKRSTEKISEDLRATLNAFLYRTGEQSNKFMLVLASNQPEQFDWAINDRIDEIVHFDLPGLEERERLVRLYFDKYVLQPASEGKQRLKVAQFDYGKKCSDLAQLTEGMSGREISKLGVAWQAAAYASEDGILNEAMIDARVADAIRQHQQKMEWLKAEGKENAAKESGKNPLQPLLEGTPV.

The interval 1–50 (MSWLFGLNKGQQGPPSVPGFPEPPSPPGGSGDGGDKNKPKDKWSNFDPTG) is disordered. Topologically, residues 1–242 (MSWLFGLNKG…FRAFISDWDK (242 aa)) are mitochondrial intermembrane. Residues 15-27 (PSVPGFPEPPSPP) show a composition bias toward pro residues. Basic and acidic residues predominate over residues 33–44 (GGDKNKPKDKWS). The stretch at 51–213 (LERAAKAARE…RENIRLKAAE (163 aa)) forms a coiled coil. A helical transmembrane segment spans residues 243-260 (VTATVAGLSLLAVGIYTA). The Mitochondrial matrix segment spans residues 261 to 594 (KNATGVAGRY…LQPLLEGTPV (334 aa)). Residue 348–355 (GPPGTGKT) coordinates ATP. The span at 571–581 (EGKENAAKESG) shows a compositional bias: basic and acidic residues. The tract at residues 571–594 (EGKENAAKESGKNPLQPLLEGTPV) is disordered.

Belongs to the AAA ATPase family.

It is found in the mitochondrion inner membrane. The protein resides in the mitochondrion matrix. It localises to the mitochondrion nucleoid. Essential for mitochondrial network organization, mitochondrial metabolism and cell growth at organism and cellular level. May play an important role in mitochondrial protein synthesis. May also participate in mitochondrial DNA replication. May bind to mitochondrial DNA D-loops and contribute to nucleoid stability. Required for enhanced channeling of cholesterol for hormone-dependent steroidogenesis. The polypeptide is ATPase family AAA domain-containing protein 3 (atad3) (Xenopus tropicalis (Western clawed frog)).